The chain runs to 171 residues: Peptide methionine sulfoxide reductase MsrA (171 aa).

Cysteine 13 is a catalytic residue.

It belongs to the MsrA Met sulfoxide reductase family.

It carries out the reaction L-methionyl-[protein] + [thioredoxin]-disulfide + H2O = L-methionyl-(S)-S-oxide-[protein] + [thioredoxin]-dithiol. The enzyme catalyses [thioredoxin]-disulfide + L-methionine + H2O = L-methionine (S)-S-oxide + [thioredoxin]-dithiol. Has an important function as a repair enzyme for proteins that have been inactivated by oxidation. Catalyzes the reversible oxidation-reduction of methionine sulfoxide in proteins to methionine. The sequence is that of Peptide methionine sulfoxide reductase MsrA from Mycobacterium ulcerans (strain Agy99).